Consider the following 135-residue polypeptide: Ribosome-binding factor A (135 aa).

It belongs to the RbfA family. As to quaternary structure, monomer. Binds 30S ribosomal subunits, but not 50S ribosomal subunits or 70S ribosomes.

Its subcellular location is the cytoplasm. One of several proteins that assist in the late maturation steps of the functional core of the 30S ribosomal subunit. Associates with free 30S ribosomal subunits (but not with 30S subunits that are part of 70S ribosomes or polysomes). Required for efficient processing of 16S rRNA. May interact with the 5'-terminal helix region of 16S rRNA. The chain is Ribosome-binding factor A from Bartonella quintana (strain Toulouse) (Rochalimaea quintana).